The chain runs to 543 residues: uncharacterized protein (543 aa).

A PE domain is found at 1-93 (MSFVTAAPEM…GGAYSSAEAA (93 aa)). The disordered stretch occupies residues 194–214 (GGAGGPGGPTDVPAGTGGAGG).

The protein belongs to the mycobacterial PE family. PGRS subfamily.

This is an uncharacterized protein from Mycobacterium tuberculosis (strain CDC 1551 / Oshkosh).